Reading from the N-terminus, the 338-residue chain is Fructose-1,6-bisphosphatase class 1 (338 aa).

Mg(2+) is bound by residues Glu-92, Asp-115, Leu-117, and Asp-118. Substrate contacts are provided by residues 118 to 121 (DGSS), Asn-211, Tyr-244, 262 to 264 (YLY), and Lys-274. Glu-280 is a Mg(2+) binding site.

This sequence belongs to the FBPase class 1 family. As to quaternary structure, homotetramer. It depends on Mg(2+) as a cofactor.

It is found in the cytoplasm. It carries out the reaction beta-D-fructose 1,6-bisphosphate + H2O = beta-D-fructose 6-phosphate + phosphate. Its pathway is carbohydrate biosynthesis; gluconeogenesis. The polypeptide is Fructose-1,6-bisphosphatase class 1 (Vibrio vulnificus (strain YJ016)).